The following is a 233-amino-acid chain: Large ribosomal subunit protein uL1 (233 aa).

The protein belongs to the universal ribosomal protein uL1 family. As to quaternary structure, part of the 50S ribosomal subunit.

Functionally, binds directly to 23S rRNA. The L1 stalk is quite mobile in the ribosome, and is involved in E site tRNA release. Its function is as follows. Protein L1 is also a translational repressor protein, it controls the translation of the L11 operon by binding to its mRNA. This is Large ribosomal subunit protein uL1 from Hamiltonella defensa subsp. Acyrthosiphon pisum (strain 5AT).